We begin with the raw amino-acid sequence, 105 residues long: Oxytocin-neurophysin 1 (105 aa).

Residues C1 and C6 are joined by a disulfide bond. At G9 the chain carries Glycine amide. Intrachain disulfides connect C22–C66, C25–C39, C33–C56, C40–C46, C73–C85, C79–C97, and C86–C91.

The protein belongs to the vasopressin/oxytocin family. Interacts with oxytocin receptor (Ki=1.5 nM). Interacts with vasopressin V1aR/AVPR1A (Ki=37 nM), V1bR/AVPR1B (Ki=222 nM), and V2R/AVPR2 receptors (Ki=823 nM).

Its subcellular location is the secreted. Its function is as follows. Neurophysin 1 specifically binds oxytocin. Functionally, oxytocin causes contraction of the smooth muscle of the uterus and of the mammary gland. Acts by binding to oxytocin receptor (OXTR). The sequence is that of Oxytocin-neurophysin 1 (OXT) from Equus caballus (Horse).